The sequence spans 1053 residues: Serine/threonine-protein phosphatase 6 regulatory ankyrin repeat subunit A (1053 aa).

27 ANK repeats span residues 40–69, 73–102, 106–135, 139–168, 172–201, 205–234, 238–267, 271–301, 305–334, 338–367, 371–400, 404–433, 437–466, 470–500, 504–534, 549–578, 582–611, 616–645, 652–681, 685–714, 718–747, 755–784, 787–817, 822–851, 855–885, 889–918, and 925–954; these read EKRT…RVNA, KWLT…DVNA, NWQT…NVNV, AGRT…NINA, KDRR…EVTC, KSYT…DMNE, YGNT…IVNQ, KGFT…DVNM, DGKT…VIDC, NGNT…DTAK, HGMF…DIDT, FGRT…DFNK, FGRS…SVND, RGCT…NPGI, QGYN…DVLM, ATIS…DLDV, SGRT…SILV, LKRT…PQNA, NGQT…NVDA, WGRT…KCLL, RGRT…SMDA, HGYT…FQKT, NAFS…SIVN, KGRT…QVNS, TGKT…ELTL, SKNT…DRNL, and ALQT…SVLA. A phosphoserine mark is found at S1007 and S1011.

Protein phosphatase 6 (PP6) holoenzyme is proposed to be a heterotrimeric complex formed by the catalytic subunit, a SAPS domain-containing subunit (PP6R) and an ankyrin repeat-domain containing regulatory subunit (ARS). Interacts with PPP6C, PPP6R1 and PPP6R3. Interacts with PPP1C and HNRPK. Ubiquitinated by the ECS(RAB40C) complex leading to its degradation and decreased PP6 activity.

The protein resides in the nucleus. It localises to the nucleoplasm. It is found in the cytoplasm. Its subcellular location is the cytosol. The protein localises to the cell projection. The protein resides in the lamellipodium. In terms of biological role, regulatory subunit of protein phosphatase 6 (PP6) that may be involved in the recognition of phosphoprotein substrates. Involved in the PP6-mediated dephosphorylation of NFKBIE opposing its degradation in response to TNF-alpha. Selectively inhibits the phosphatase activity of PPP1C. Targets PPP1C to modulate HNRPK phosphorylation. Involved in the PP6-mediated dephosphorylation of MOB1 and induced focal adhesion assembly during cell migration. In Homo sapiens (Human), this protein is Serine/threonine-protein phosphatase 6 regulatory ankyrin repeat subunit A.